The chain runs to 220 residues: Ribonuclease HII (220 aa).

The region spanning 27–220 (CIIVGVDEVG…SKISYMFKNS (194 aa)) is the RNase H type-2 domain. A divalent metal cation contacts are provided by Asp-33, Glu-34, and Asp-128.

Belongs to the RNase HII family. It depends on Mn(2+) as a cofactor. Mg(2+) serves as cofactor.

It localises to the cytoplasm. The catalysed reaction is Endonucleolytic cleavage to 5'-phosphomonoester.. Functionally, endonuclease that specifically degrades the RNA of RNA-DNA hybrids. The protein is Ribonuclease HII of Ehrlichia ruminantium (strain Gardel).